A 64-amino-acid polypeptide reads, in one-letter code: Kappa-lycotoxin-Os1a (64 aa).

4 disulfides stabilise this stretch: cysteine 10-cysteine 26, cysteine 17-cysteine 56, cysteine 19-cysteine 42, and cysteine 28-cysteine 40.

This sequence belongs to the neurotoxin 04 (omega-agtx) family. 01 (type I omega-agtx) subfamily. As to expression, expressed by the venom gland.

The protein resides in the secreted. Its function is as follows. Insecticidal to house crickets. It induces an excitatory slow-onset impact that leads to irreversible spastic paralysis. It also modifies human voltage-gated potassium channel Kv1.5/KCNA5. Most likely, it binds to the voltage-sensing domain of the channel, suggesting it does not block the pore but prevents its opening at physiological membrane potentials. The recombinant peptide binds to the channel in an irreversible manner and slows down the hKv1.5 current activation kinetics. It is not toxic to mice, when intracranially injected (at 0.5 ug/g mouse). In Oculicosa supermirabilis (Central Asian wolf-spider), this protein is Kappa-lycotoxin-Os1a.